The primary structure comprises 297 residues: MGSLVREWVGFQQFPAATQEKLIEFFGKLKQKDMNSMTVLVLGKGGVGKSSTVNSLIGEQVVRVSPFQAEGLRPVMVSRTMGGFTINIIDTPGLVEAGYVNHQALELIKGFLVNRTIDVLLYVDRLDVYRVDELDKQVVIAITQTFGKEIWCKTLLVLTHAQFSPPDELSYETFSSKRSDSLLKTIRAGSKMRKQEFEDSAIAVVYAENSGRCSKNDKDEKALPNGEAWIPNLVKAITDVATNQRKAIHVDKKMVDGSYSDDKGKKLIPLIIGAQYLIVKMIQGAIRNDIKTSGKPL.

Residues 34–258 enclose the AIG1-type G domain; the sequence is MNSMTVLVLG…HVDKKMVDGS (225 aa). The chain crosses the membrane as a helical span at residues 37–53; the sequence is MTVLVLGKGGVGKSSTV. GTP-binding positions include 46–51 and 65–70; these read GVGKSS and SPFQAE. Residues Ser50 and Gln68 each coordinate Mg(2+). 2 homodimerization regions span residues 65-68 and 125-130; these read SPFQ and RLDVYR. His160 contacts GTP. Ser181 carries the post-translational modification Phosphoserine. Residue 208–209 participates in GTP binding; it reads EN.

It belongs to the TRAFAC class TrmE-Era-EngA-EngB-Septin-like GTPase superfamily. AIG1/Toc34/Toc159-like paraseptin GTPase family. TOC34 subfamily. In terms of assembly, homodimer, heterodimer with TOC34 and TOC159, and monomer. The homodimerization and the dimerization with TOC159 require the binding of GTP on Arg-130, and a hypothetical coGAP factor. The dimeric form has a higher GTPase activity than the monomeric form. Part of the TOC core complex that includes 1 protein for the specific recognition of transit peptides surrounded by a ring composed of four proteins forming translocation channels, and four to five GTP-binding proteins providing energy. This core complex can interact with components of the TIC complex to form a larger import complex. Chloroplastic protein precursor such as prSS (precursor of the RuBisCO small subunit) interacts with these complexes. The TOC complex contains a specific subset of polar lipids such as digalactosyldiacylglyceride (DGDG), phosphatidylcholine (PC) and phosphatidylglycerol (PG). Interacts at least with TOC75-3. Forms large complexes including TOC33, pPORA and OEP161 during pPORA import into plastids at the plastid envelope membrane. Interacts with SP1. The cofactor is Mg(2+). In terms of processing, phosphorylated by a kinase present in the outer envelope of chloroplast. When Ser-181 is phosphorylated, the binding to preprotein, GTP and GDP is inhibited, and thus, GTPase activity is repressed. As to expression, mostly expressed in seedlings and flowers, and, to a lower extent, in roots, stems, and leaves.

It localises to the plastid. Its subcellular location is the chloroplast outer membrane. In terms of biological role, GTPase involved in protein precursor import into chloroplasts. Seems to recognize chloroplast-destined precursor proteins and regulate their presentation to the translocation channel through GTP hydrolysis. Binds GTP, GDP, XTP, but not ATP. Probably specialized in the import of nuclear encoded photosynthetic preproteins from the cytoplasm to the chloroplast, especially during early development stages. The polypeptide is Translocase of chloroplast 33, chloroplastic (TOC33) (Arabidopsis thaliana (Mouse-ear cress)).